A 150-amino-acid chain; its full sequence is D-aminoacyl-tRNA deacylase (150 aa).

A Gly-cisPro motif, important for rejection of L-amino acids motif is present at residues glycine 138–proline 139.

It belongs to the DTD family. As to quaternary structure, homodimer.

It localises to the cytoplasm. It catalyses the reaction glycyl-tRNA(Ala) + H2O = tRNA(Ala) + glycine + H(+). The catalysed reaction is a D-aminoacyl-tRNA + H2O = a tRNA + a D-alpha-amino acid + H(+). In terms of biological role, an aminoacyl-tRNA editing enzyme that deacylates mischarged D-aminoacyl-tRNAs. Also deacylates mischarged glycyl-tRNA(Ala), protecting cells against glycine mischarging by AlaRS. Acts via tRNA-based rather than protein-based catalysis; rejects L-amino acids rather than detecting D-amino acids in the active site. By recycling D-aminoacyl-tRNA to D-amino acids and free tRNA molecules, this enzyme counteracts the toxicity associated with the formation of D-aminoacyl-tRNA entities in vivo and helps enforce protein L-homochirality. The polypeptide is D-aminoacyl-tRNA deacylase (Azobacteroides pseudotrichonymphae genomovar. CFP2).